The sequence spans 175 residues: MAISPEEILHIAYEELVEIEPMTSIPELRLLERTYPPLMPLDIARIPLYAALLLKKSNMCKIRLPSYLQLESLKMSMDVEIEKADEYSCIHPYFFPLATELLENCYNVESIEESKMIVEKIKEIRLAKTLKGIKCLDGKALNMNNITLFEFNEIKELILGSAEVGRRIEDLAKDQ.

The protein belongs to the GINS2/PSF2 family. Component of the GINS complex which is a heterotetramer of SLD5, PSF1, PSF2 and PSF3.

Its subcellular location is the nucleus. Functionally, the GINS complex plays an essential role in the initiation of DNA replication. This Encephalitozoon cuniculi (strain GB-M1) (Microsporidian parasite) protein is Probable DNA replication complex GINS protein PSF2.